The chain runs to 2492 residues: Transcriptional regulator ATRX (2492 aa).

The interval 1–146 (MTAEPMSESK…DKDDFKGPEF (146 aa)) is disordered. Residue lysine 10 forms a Glycyl lysine isopeptide (Lys-Gly) (interchain with G-Cter in SUMO2) linkage. Positions 17–27 (KLHDFLAHSSE) are enriched in basic and acidic residues. A phosphoserine mark is found at serine 25 and serine 34. The span at 40–57 (MNQNTDKISGSGSNSDMM) shows a compositional bias: polar residues. Residues 58 to 72 (ENSKEEGTSSSEKSK) are compositionally biased toward basic and acidic residues. At tyrosine 89 the chain carries Phosphotyrosine. Residues serine 92 and serine 112 each carry the phosphoserine modification. Residues 92-108 (SDDEKPLDDETVNEDAS) show a composition bias toward acidic residues. Positions 135–146 (NEDKDDFKGPEF) are enriched in basic and acidic residues. Glycyl lysine isopeptide (Lys-Gly) (interchain with G-Cter in SUMO2) cross-links involve residues lysine 138 and lysine 142. The ADD domain maps to 159-296 (KRGEDGLHGI…LEQLLQQNKK (138 aa)). The GATA-type; atypical zinc finger occupies 170 to 206 (SCTACGQQVNHFQKDSIYRHPSLQVLICKNCFKYYMS). Residue serine 213 is modified to Phosphoserine. Residues 217 to 272 (DEQCRWCAEGGNLICCDFCHNAFCKKCILRNLGRKELSTIMDENNQWYCYICHPEP) form a PHD-type; atypical zinc finger. A Glycyl lysine isopeptide (Lys-Gly) (interchain with G-Cter in SUMO2) cross-link involves residue lysine 299. Position 316 is a phosphoserine (serine 316). Lysine 438 is covalently cross-linked (Glycyl lysine isopeptide (Lys-Gly) (interchain with G-Cter in SUMO2)). 2 stretches are compositionally biased toward basic and acidic residues: residues 457–473 (ISKS…DSEH) and 481–502 (EEQR…KEEP). Positions 457–581 (ISKSEAKLSR…GGIKSKTTAK (125 aa)) are disordered. The segment covering 557–567 (ESSSVKLSISS) has biased composition (low complexity). The PxVxL motif motif lies at 581–594 (KVTKELYVKLTPVS). A Phosphothreonine modification is found at threonine 591. A disordered region spans residues 593–619 (VSLSNSPIKGADCQEVPQDKDGYKSCG). Phosphoserine is present on residues serine 594 and serine 598. Residue lysine 623 forms a Glycyl lysine isopeptide (Lys-Gly) (interchain with G-Cter in SUMO1); alternate linkage. Lysine 623 participates in a covalent cross-link: Glycyl lysine isopeptide (Lys-Gly) (interchain with G-Cter in SUMO2); alternate. A Phosphoserine modification is found at serine 634. The disordered stretch occupies residues 652–949 (DLRRSPRVKT…AETKEKSKHL (298 aa)). Threonine 674 bears the Phosphothreonine mark. A phosphoserine mark is found at serine 675, serine 677, serine 729, and serine 731. The segment covering 755 to 777 (NEIHTNHKTLYDLKTQAGKDDKG) has biased composition (basic and acidic residues). Phosphoserine is present on residues serine 784, serine 819, serine 849, serine 850, serine 875, and serine 876. A compositionally biased stretch (basic and acidic residues) spans 843–864 (NTKDFDSSEDEKHSKKGMDNQG). Residues 878–887 (DAERKQEREN) show a composition bias toward basic and acidic residues. Serine 889 carries the phosphoserine modification. Composition is skewed to basic and acidic residues over residues 894–909 (TVDK…DRLP) and 920–944 (GVDK…ETKE). Serine 962 carries the phosphoserine modification. Position 967 is an N6-acetyllysine (lysine 967). Positions 967-1004 (KFLKKDQSDETSEDDKKQSKKGTEEKKKTSDFKKKVIK) are enriched in basic and acidic residues. The interval 967–1479 (KFLKKDQSDE…SKSPGKGRKK (513 aa)) is disordered. Serine 974 is subject to Phosphoserine. Threonine 977 carries the phosphothreonine modification. Residue lysine 1004 forms a Glycyl lysine isopeptide (Lys-Gly) (interchain with G-Cter in SUMO2) linkage. 3 positions are modified to phosphoserine: serine 1011, serine 1012, and serine 1013. The segment covering 1015–1027 (GTEKLPEREEICH) has biased composition (basic and acidic residues). The span at 1045–1055 (KNKKIRDKTSK) shows a compositional bias: basic residues. Composition is skewed to basic and acidic residues over residues 1056–1082 (KKDE…DKKS) and 1103–1139 (KRQD…ERRN). At serine 1061 the chain carries Phosphoserine. Tyrosine 1063 bears the Phosphotyrosine mark. Basic residues predominate over residues 1167 to 1195 (KKKQRTSSKKKAVIVKEKKRNSLRTSTKR). Positions 1189-1326 (LRTSTKRKQA…KNQVNSESDS (138 aa)) are interaction with DAXX. Polar residues predominate over residues 1233–1246 (LVLSSHTGFCQSSG). A phosphoserine mark is found at serine 1244, serine 1245, and serine 1253. Residues 1267-1281 (PENRIAKKMLLEEIK) show a composition bias toward basic and acidic residues. The span at 1286–1297 (SDEDGSSDDEPE) shows a compositional bias: acidic residues. The span at 1298-1308 (EGKKRTGKQNE) shows a compositional bias: basic and acidic residues. 3 positions are modified to phosphoserine: serine 1322, serine 1324, and serine 1326. Positions 1334-1345 (PRYRHRLLRHKL) are enriched in basic residues. A phosphoserine mark is found at serine 1348 and serine 1352. Composition is skewed to basic and acidic residues over residues 1353–1368 (GEEK…EVKG) and 1408–1417 (KKAELEENQR). Over residues 1419 to 1428 (YKQKKKRRRI) the composition is skewed to basic residues. Over residues 1443 to 1468 (EEEEEEKEEEEEEEEEEEEEEEDEND) the composition is skewed to acidic residues. Lysine 1488 is covalently cross-linked (Glycyl lysine isopeptide (Lys-Gly) (interchain with G-Cter in SUMO2)). Position 1527 is a phosphoserine (serine 1527). A Phosphothreonine modification is found at threonine 1529. In terms of domain architecture, Helicase ATP-binding spans 1581–1768 (KTKKSPGSGC…HCMVNFIKEN (188 aa)). 1594-1601 (HCMGLGKT) is an ATP binding site. Residues 1719 to 1722 (DEGH) carry the DEGH box motif. Residues serine 1906 and serine 1913 each carry the phosphoserine modification. The interval 1913–2000 (SDSDETSMSL…SSNPSSPAPD (88 aa)) is disordered. Residues 1929–1938 (KKKKKGKKGK) show a composition bias toward basic residues. Lysine 1982 is covalently cross-linked (Glycyl lysine isopeptide (Lys-Gly) (interchain with G-Cter in SUMO1); alternate). Residue lysine 1982 forms a Glycyl lysine isopeptide (Lys-Gly) (interchain with G-Cter in SUMO2); alternate linkage. Residue lysine 1987 forms a Glycyl lysine isopeptide (Lys-Gly) (interchain with G-Cter in SUMO2) linkage. Residues 1990-1999 (SSSNPSSPAP) are compositionally biased toward low complexity. Serine 1992 and serine 1996 each carry phosphoserine. An interaction with MECP2 region spans residues 2010–2280 (DAEVLEHSGK…RKAAWAEYEA (271 aa)). The Helicase C-terminal domain occupies 2025-2205 (EILRMAEEIG…ERHFTMNELT (181 aa)). Serine 2220 carries the post-translational modification Phosphoserine. Positions 2462-2492 (PVAGGMQPPPLQRAPPPMRSKNPGPSQGKSM) are disordered. Pro residues predominate over residues 2468 to 2479 (QPPPLQRAPPPM). An omega-N-methylarginine mark is found at arginine 2474 and arginine 2480.

This sequence belongs to the SNF2/RAD54 helicase family. As to quaternary structure, interacts with DAXX to form the chromatin remodeling complex ATRX:DAXX. Probably binds EZH2. Binds annexin V in a calcium and phosphatidylcholine/phosphatidylserine-dependent manner. Interacts directly with CBX5 via the PxVxL motif. Interacts with RAD50, MRE11 and NBN; indicative for an association with the MRN complex. Interacts with histone MACROH2A1. Interacts with histone H3 peptides methylated at 'Lys-10' with preferences H3K9me3 &gt; H3K9me2 &gt; H3K9me1. Interacts with histone H3 peptides unmethylated at 'Lys-5' (H3K4me0). Interacts with MECP2, SMC1 and SMC3. Interacts with SETDB1, TRIM28 and ZNF274.

It localises to the nucleus. The protein resides in the chromosome. The protein localises to the telomere. It is found in the PML body. It carries out the reaction ATP + H2O = ADP + phosphate + H(+). Its function is as follows. Involved in transcriptional regulation and chromatin remodeling. Facilitates DNA replication in multiple cellular environments and is required for efficient replication of a subset of genomic loci. Binds to DNA tandem repeat sequences in both telomeres and euchromatin and in vitro binds DNA quadruplex structures. May help stabilizing G-rich regions into regular chromatin structures by remodeling G4 DNA and incorporating H3.3-containing nucleosomes. Catalytic component of the chromatin remodeling complex ATRX:DAXX which has ATP-dependent DNA translocase activity and catalyzes the replication-independent deposition of histone H3.3 in pericentric DNA repeats outside S-phase and telomeres, and the in vitro remodeling of H3.3-containing nucleosomes. Its heterochromatin targeting is proposed to involve a combinatorial readout of histone H3 modifications (specifically methylation states of H3K9 and H3K4) and association with CBX5. Involved in maintaining telomere structural integrity in embryonic stem cells which probably implies recruitment of CBX5 to telomeres. May be involved in transcriptional regulation of telomeric repeat-containing RNA (TERRA). Acts as a negative regulator of chromatin incorporation of transcriptionally repressive histone MACROH2A1, particularily at telomeres. Participates in the allele-specific gene expression at the imprinted IGF2/H19 gene locus. On the maternal allele, required for the chromatin occupancy of SMC1 and CTCTF within the H19 imprinting control region (ICR) and involved in esatblishment of histone tails modifications in the ICR. May be involved in brain development and facial morphogenesis. Binds to zinc-finger coding genes with atypical chromatin signatures and regulates its H3K9me3 levels. Forms a complex with ZNF274, TRIM28 and SETDB1 to facilitate the deposition and maintenance of H3K9me3 at the 3' exons of zinc-finger genes. This chain is Transcriptional regulator ATRX (ATRX), found in Pongo pygmaeus (Bornean orangutan).